We begin with the raw amino-acid sequence, 375 residues long: Chaperone protein DnaJ (375 aa).

The region spanning D5–G69 is the J domain. Residues G130 to A208 form a CR-type zinc finger. Zn(2+)-binding residues include C143, C146, C160, C163, C182, C185, C196, and C199. CXXCXGXG motif repeat units follow at residues C143–G150, C160–G167, C182–G189, and C196–G203.

The protein belongs to the DnaJ family. In terms of assembly, homodimer. Zn(2+) serves as cofactor.

Its subcellular location is the cytoplasm. Its function is as follows. Participates actively in the response to hyperosmotic and heat shock by preventing the aggregation of stress-denatured proteins and by disaggregating proteins, also in an autonomous, DnaK-independent fashion. Unfolded proteins bind initially to DnaJ; upon interaction with the DnaJ-bound protein, DnaK hydrolyzes its bound ATP, resulting in the formation of a stable complex. GrpE releases ADP from DnaK; ATP binding to DnaK triggers the release of the substrate protein, thus completing the reaction cycle. Several rounds of ATP-dependent interactions between DnaJ, DnaK and GrpE are required for fully efficient folding. Also involved, together with DnaK and GrpE, in the DNA replication of plasmids through activation of initiation proteins. The chain is Chaperone protein DnaJ from Serratia proteamaculans (strain 568).